Here is a 255-residue protein sequence, read N- to C-terminus: MKRALLITVALIAVLALTTLVAWRYLFPHDPDALRHIVMQQCLPGERERQEPAPCAQVNLPAGYVVLKDINGPLQYLLMPTWKINGVESPLLLSDNTPNFFWQAWQARRWMSEKRGSPVPDSAVSLTINSRMGRSQNHFHIHISCLRPDVRAQLDAAMNAIGSRWQPFPGSLRGHDYLARRVSGEELSRRSPFMMLAEEVPQAREHMGRYSLALAPLKDGAFVLLATQRQLLQFNLAHSEELQDHDCALLHEGTP.

Residues 5–27 traverse the membrane as a helical segment; that stretch reads LLITVALIAVLALTTLVAWRYLF.

The protein belongs to the Cdh family.

It is found in the cell inner membrane. It carries out the reaction a CDP-1,2-diacyl-sn-glycerol + H2O = a 1,2-diacyl-sn-glycero-3-phosphate + CMP + 2 H(+). Its pathway is phospholipid metabolism; CDP-diacylglycerol degradation; phosphatidate from CDP-diacylglycerol: step 1/1. The polypeptide is CDP-diacylglycerol pyrophosphatase (Cronobacter sakazakii (strain ATCC BAA-894) (Enterobacter sakazakii)).